We begin with the raw amino-acid sequence, 202 residues long: Dual-action ribosomal maturation protein DarP (202 aa).

Residues 1–13 (MPPMTRNTRNNPN) show a composition bias toward low complexity. The segment at 1 to 39 (MPPMTRNTRNNPNGRFPGAFAPEDEDDLPKSKSQRKRDM) is disordered.

Belongs to the DarP family.

It is found in the cytoplasm. Its function is as follows. Member of a network of 50S ribosomal subunit biogenesis factors which assembles along the 30S-50S interface, preventing incorrect 23S rRNA structures from forming. Promotes peptidyl transferase center (PTC) maturation. In Cupriavidus metallidurans (strain ATCC 43123 / DSM 2839 / NBRC 102507 / CH34) (Ralstonia metallidurans), this protein is Dual-action ribosomal maturation protein DarP.